The sequence spans 207 residues: 3-demethoxyubiquinol 3-hydroxylase (207 aa).

Fe cation-binding residues include glutamate 56, glutamate 86, histidine 89, glutamate 138, glutamate 170, and histidine 173.

The protein belongs to the COQ7 family. The cofactor is Fe cation.

It localises to the cell membrane. It catalyses the reaction a 5-methoxy-2-methyl-3-(all-trans-polyprenyl)benzene-1,4-diol + AH2 + O2 = a 3-demethylubiquinol + A + H2O. It participates in cofactor biosynthesis; ubiquinone biosynthesis. Catalyzes the hydroxylation of 2-nonaprenyl-3-methyl-6-methoxy-1,4-benzoquinol during ubiquinone biosynthesis. This Cupriavidus necator (strain ATCC 17699 / DSM 428 / KCTC 22496 / NCIMB 10442 / H16 / Stanier 337) (Ralstonia eutropha) protein is 3-demethoxyubiquinol 3-hydroxylase.